A 520-amino-acid polypeptide reads, in one-letter code: GMP synthase [glutamine-hydrolyzing] (520 aa).

Residues 3 to 200 (AIAIIDFGSQ…FLDIANCKRD (198 aa)) enclose the Glutamine amidotransferase type-1 domain. The active-site Nucleophile is cysteine 84. Residues histidine 175 and glutamate 177 contribute to the active site. In terms of domain architecture, GMPS ATP-PPase spans 201 to 386 (WTMKSFIEEQ…IGLSDEIIFQ (186 aa)). An ATP-binding site is contributed by 228–234 (SGGVDSS).

Homodimer.

It catalyses the reaction XMP + L-glutamine + ATP + H2O = GMP + L-glutamate + AMP + diphosphate + 2 H(+). It participates in purine metabolism; GMP biosynthesis; GMP from XMP (L-Gln route): step 1/1. In terms of biological role, catalyzes the synthesis of GMP from XMP. In Wolbachia pipientis wMel, this protein is GMP synthase [glutamine-hydrolyzing].